The chain runs to 112 residues: DNA-binding protein Mboo_1886 (112 aa).

Belongs to the PDCD5 family.

This is DNA-binding protein Mboo_1886 from Methanoregula boonei (strain DSM 21154 / JCM 14090 / 6A8).